A 372-amino-acid chain; its full sequence is Cobalt-precorrin-5B C(1)-methyltransferase (372 aa).

This sequence belongs to the CbiD family.

It carries out the reaction Co-precorrin-5B + S-adenosyl-L-methionine = Co-precorrin-6A + S-adenosyl-L-homocysteine. It functions in the pathway cofactor biosynthesis; adenosylcobalamin biosynthesis; cob(II)yrinate a,c-diamide from sirohydrochlorin (anaerobic route): step 6/10. Functionally, catalyzes the methylation of C-1 in cobalt-precorrin-5B to form cobalt-precorrin-6A. The chain is Cobalt-precorrin-5B C(1)-methyltransferase from Geobacillus kaustophilus (strain HTA426).